An 896-amino-acid polypeptide reads, in one-letter code: Alanine--tRNA ligase (896 aa).

Residues His580, His584, Cys683, and His687 each contribute to the Zn(2+) site.

This sequence belongs to the class-II aminoacyl-tRNA synthetase family. Requires Zn(2+) as cofactor.

It localises to the cytoplasm. The catalysed reaction is tRNA(Ala) + L-alanine + ATP = L-alanyl-tRNA(Ala) + AMP + diphosphate. Functionally, catalyzes the attachment of alanine to tRNA(Ala) in a two-step reaction: alanine is first activated by ATP to form Ala-AMP and then transferred to the acceptor end of tRNA(Ala). Also edits incorrectly charged Ser-tRNA(Ala) and Gly-tRNA(Ala) via its editing domain. This Mycolicibacterium smegmatis (strain ATCC 700084 / mc(2)155) (Mycobacterium smegmatis) protein is Alanine--tRNA ligase.